A 464-amino-acid polypeptide reads, in one-letter code: tRNA-2-methylthio-N(6)-dimethylallyladenosine synthase (464 aa).

The segment at 1-24 (MSDLVPLSRKPAPAAGGPAPSPAA) is disordered. Over residues 8 to 18 (SRKPAPAAGGP) the composition is skewed to low complexity. Residues 27–142 (RKVYVHTFGC…LPEMVERARD (116 aa)) form the MTTase N-terminal domain. Positions 36, 72, 105, 180, 184, and 187 each coordinate [4Fe-4S] cluster. Positions 166–398 (ARGRVTAFVT…LAAQRRIAGE (233 aa)) constitute a Radical SAM core domain. One can recognise a TRAM domain in the interval 401–464 (AGELGKVVEV…GGSSLSGTLA (64 aa)).

It belongs to the methylthiotransferase family. MiaB subfamily. In terms of assembly, monomer. [4Fe-4S] cluster serves as cofactor.

The protein resides in the cytoplasm. It carries out the reaction N(6)-dimethylallyladenosine(37) in tRNA + (sulfur carrier)-SH + AH2 + 2 S-adenosyl-L-methionine = 2-methylsulfanyl-N(6)-dimethylallyladenosine(37) in tRNA + (sulfur carrier)-H + 5'-deoxyadenosine + L-methionine + A + S-adenosyl-L-homocysteine + 2 H(+). In terms of biological role, catalyzes the methylthiolation of N6-(dimethylallyl)adenosine (i(6)A), leading to the formation of 2-methylthio-N6-(dimethylallyl)adenosine (ms(2)i(6)A) at position 37 in tRNAs that read codons beginning with uridine. The chain is tRNA-2-methylthio-N(6)-dimethylallyladenosine synthase from Anaeromyxobacter sp. (strain K).